We begin with the raw amino-acid sequence, 757 residues long: RNA-directed RNA polymerase catalytic subunit (757 aa).

A disordered region spans residues 53-82; it reads GRWTTNTETGAPQLNPIDGPLPEDNEPSGY. The span at 55 to 64 shows a compositional bias: polar residues; the sequence is WTTNTETGAP. 2 short sequence motifs (nuclear localization signal) span residues 187–195 and 203–216; these read RKRRVRDNM and RTIGKKKQRLNKRS. Positions 249-256 are promoter-binding site; sequence RGFVYFVE. The region spanning 286–483 is the RdRp catalytic domain; sequence VRKMMTNSQD…GINMSKKKSY (198 aa).

This sequence belongs to the influenza viruses polymerase PB1 family. Influenza RNA polymerase is composed of three subunits: PB1, PB2 and PA. Interacts (via N-terminus) with PA (via C-terminus). Interacts (via C-terminus) with PB2 (via N-terminus); this interaction is essential for transcription initiation. Interacts (via C-terminus) with human PKP2 (via N-terminus); the interaction competitively inhibits the interaction between the RNA polymerase subunits PB1 and PB2. Phosphorylated by host PRKCA.

Its subcellular location is the host nucleus. The protein resides in the host cytoplasm. It carries out the reaction RNA(n) + a ribonucleoside 5'-triphosphate = RNA(n+1) + diphosphate. Its function is as follows. RNA-dependent RNA polymerase which is responsible for replication and transcription of virus RNA segments. The transcription of viral mRNAs occurs by a unique mechanism called cap-snatching. 5' methylated caps of cellular mRNAs are cleaved after 10-13 nucleotides by PA. In turn, these short capped RNAs are used as primers by PB1 for transcription of viral mRNAs. During virus replication, PB1 initiates RNA synthesis and copy vRNA into complementary RNA (cRNA) which in turn serves as a template for the production of more vRNAs. The sequence is that of RNA-directed RNA polymerase catalytic subunit from Influenza A virus (strain A/Brevig Mission/1/1918 H1N1) (Influenza A virus (strain A/South Carolina/1/1918 H1N1)).